The sequence spans 270 residues: NAD kinase (270 aa).

Asp-63 functions as the Proton acceptor in the catalytic mechanism. Residues 63 to 64, Arg-68, 131 to 132, Lys-142, Arg-159, Asp-161, 172 to 177, Ala-196, and Gln-230 contribute to the NAD(+) site; these read DG, NE, and TAYAMS.

This sequence belongs to the NAD kinase family. It depends on a divalent metal cation as a cofactor.

It localises to the cytoplasm. The enzyme catalyses NAD(+) + ATP = ADP + NADP(+) + H(+). Its function is as follows. Involved in the regulation of the intracellular balance of NAD and NADP, and is a key enzyme in the biosynthesis of NADP. Catalyzes specifically the phosphorylation on 2'-hydroxyl of the adenosine moiety of NAD to yield NADP. The protein is NAD kinase of Methanoregula boonei (strain DSM 21154 / JCM 14090 / 6A8).